The sequence spans 364 residues: Aminomethyltransferase (364 aa).

Belongs to the GcvT family. The glycine cleavage system is composed of four proteins: P, T, L and H.

The catalysed reaction is N(6)-[(R)-S(8)-aminomethyldihydrolipoyl]-L-lysyl-[protein] + (6S)-5,6,7,8-tetrahydrofolate = N(6)-[(R)-dihydrolipoyl]-L-lysyl-[protein] + (6R)-5,10-methylene-5,6,7,8-tetrahydrofolate + NH4(+). The glycine cleavage system catalyzes the degradation of glycine. This is Aminomethyltransferase from Shewanella oneidensis (strain ATCC 700550 / JCM 31522 / CIP 106686 / LMG 19005 / NCIMB 14063 / MR-1).